A 409-amino-acid polypeptide reads, in one-letter code: Autophagy-related protein 37 (409 aa).

Residues 1 to 313 (MSESIDRVFV…LKLIKTVIKH (313 aa)) lie on the Cytoplasmic side of the membrane. The ACB domain maps to 5-103 (IDRVFVKAIG…LIDTMKQFAS (99 aa)). Residues 314–334 (VAIDAVIIAVLVAVIKRSIII) traverse the membrane as a helical segment. Topologically, residues 335 to 409 (PNLISNEISL…VSRIRLIKRN (75 aa)) are peroxisomal.

Belongs to the ATG37 family. Interacts with ATG30 and PEX3. In terms of processing, phosphorylated.

The protein localises to the peroxisome membrane. Its function is as follows. Acyl-CoA binding protein which acts as the peroxisome receptor for pexophagy. Required for both micropexophagy and macropexophagy, but not for the cytoplasm to vacuole transport (Cvt) or autophagy pathways. Required for functional micropexophagic apparatus (MIPA) and relocation of ATG11 to the peroxisome-sequestering arms of the vacuole. Binds palmitoyl-CoA but not oleyl-CoA. In Komagataella phaffii (strain GS115 / ATCC 20864) (Yeast), this protein is Autophagy-related protein 37.